Here is a 397-residue protein sequence, read N- to C-terminus: Subtilisin-like protease 3 (397 aa).

The first 19 residues, 1 to 19, serve as a signal peptide directing secretion; that stretch reads MGCIKVISVFLAAIAAVDA. Positions 20-116 are excised as a propeptide; that stretch reads RAFFHNRGGN…VEHDRVVKLA (97 aa). In terms of domain architecture, Inhibitor I9 spans 35 to 116; it reads SYIVVMKDGV…VEHDRVVKLA (82 aa). Residues 126 to 397 enclose the Peptidase S8 domain; that stretch reads TWGLGRVSHK…NRLLYNGSGR (272 aa). Active-site charge relay system residues include Asp158 and His189. Asn250 is a glycosylation site (N-linked (GlcNAc...) asparagine). Ser344 serves as the catalytic Charge relay system. Asn393 carries N-linked (GlcNAc...) asparagine glycosylation.

The protein belongs to the peptidase S8 family.

Its subcellular location is the secreted. Secreted subtilisin-like serine protease with keratinolytic activity that contributes to pathogenicity. The chain is Subtilisin-like protease 3 (SUB3) from Arthroderma benhamiae (strain ATCC MYA-4681 / CBS 112371) (Trichophyton mentagrophytes).